We begin with the raw amino-acid sequence, 365 residues long: Glycerol dehydrogenase (365 aa).

Positions 37, 94, 95, 116, and 119 each coordinate NAD(+). Glycerol is bound at residue aspartate 121. The NAD(+) site is built by serine 125, leucine 127, and tyrosine 131. Residues aspartate 171, histidine 254, and histidine 271 each coordinate Zn(2+). Position 254 (histidine 254) interacts with glycerol.

The protein belongs to the iron-containing alcohol dehydrogenase family. The cofactor is Zn(2+).

The enzyme catalyses glycerol + NAD(+) = dihydroxyacetone + NADH + H(+). Its pathway is polyol metabolism; glycerol fermentation; glycerone phosphate from glycerol (oxidative route): step 1/2. Functionally, catalyzes the NAD-dependent oxidation of glycerol to dihydroxyacetone (glycerone). Allows microorganisms to utilize glycerol as a source of carbon under anaerobic conditions. This Pseudomonas putida (Arthrobacter siderocapsulatus) protein is Glycerol dehydrogenase (gldA).